The sequence spans 86 residues: DNA-directed RNA polymerase subunit omega (86 aa).

Basic and acidic residues predominate over residues 67–76 (SAREHAKESQ). A disordered region spans residues 67–86 (SAREHAKESQVSEEEVREES). Over residues 77-86 (VSEEEVREES) the composition is skewed to acidic residues.

This sequence belongs to the RNA polymerase subunit omega family. In terms of assembly, the RNAP catalytic core consists of 2 alpha, 1 beta, 1 beta' and 1 omega subunit. When a sigma factor is associated with the core the holoenzyme is formed, which can initiate transcription.

The enzyme catalyses RNA(n) + a ribonucleoside 5'-triphosphate = RNA(n+1) + diphosphate. Promotes RNA polymerase assembly. Latches the N- and C-terminal regions of the beta' subunit thereby facilitating its interaction with the beta and alpha subunits. This is DNA-directed RNA polymerase subunit omega from Nitrosococcus oceani (strain ATCC 19707 / BCRC 17464 / JCM 30415 / NCIMB 11848 / C-107).